The following is a 547-amino-acid chain: Hydroxylamine reductase (547 aa).

The [4Fe-4S] cluster site is built by Cys-5, Cys-8, Cys-17, and Cys-23. Hybrid [4Fe-2O-2S] cluster is bound by residues His-242, Glu-266, Cys-310, Cys-401, Cys-429, Cys-454, Glu-489, and Lys-491. A Cysteine persulfide modification is found at Cys-401.

It belongs to the HCP family. [4Fe-4S] cluster is required as a cofactor. The cofactor is hybrid [4Fe-2O-2S] cluster.

The protein localises to the cytoplasm. It carries out the reaction A + NH4(+) + H2O = hydroxylamine + AH2 + H(+). Its function is as follows. Catalyzes the reduction of hydroxylamine to form NH(3) and H(2)O. In Thermoanaerobacter pseudethanolicus (strain ATCC 33223 / 39E) (Clostridium thermohydrosulfuricum), this protein is Hydroxylamine reductase.